The following is a 93-amino-acid chain: MASFLLSILVFFLSALVLVPQGFAEYYLNPAYRPPQTEPPVHKPPHKEPPVHKPPHKDPPVNKPPQKEPPVHKPPRKEPPTHRHPPSEDNIHF.

Residues 1-24 (MASFLLSILVFFLSALVLVPQGFA) form the signal peptide. Residues 30–93 (PAYRPPQTEP…HPPSEDNIHF (64 aa)) form a disordered region. Repeat copies occupy residues 34–38 (PPQTE), 39–43 (PPVHK), 44–48 (PPHKE), 49–53 (PPVHK), 54–58 (PPHKD), 59–63 (PPVNK), 64–68 (PPQKE), 69–73 (PPVHK), 74–78 (PPRKE), and 79–83 (PPTHR). The segment at 34–83 (PPQTEPPVHKPPHKEPPVHKPPHKDPPVNKPPQKEPPVHKPPRKEPPTHR) is 10 X 5 AA tandem repeats of P-P-[HQVRT]-[HKNT]-[DEKR]. Residues 46–93 (HKEPPVHKPPHKDPPVNKPPQKEPPVHKPPRKEPPTHRHPPSEDNIHF) show a composition bias toward basic and acidic residues.

It belongs to the plant proline-rich protein superfamily. ENOD12 family. More abundant in the young nodules than the mature nodules.

It localises to the secreted. It is found in the cell wall. Involved in the infection process during the plant-rhizobium interaction. In Medicago sativa (Alfalfa), this protein is Early nodulin-12A (ENOD12A).